Here is a 305-residue protein sequence, read N- to C-terminus: Probable DNA-invertase y4cG (305 aa).

The region spanning 15 to 148 (RLIGYARVST…SGMQAAKARG (134 aa)) is the Resolvase/invertase-type recombinase catalytic domain. The active-site O-(5'-phospho-DNA)-serine intermediate is the serine 23.

Belongs to the site-specific recombinase resolvase family.

This Sinorhizobium fredii (strain NBRC 101917 / NGR234) protein is Probable DNA-invertase y4cG.